The chain runs to 157 residues: Small ribosomal subunit protein uS7 (157 aa).

It belongs to the universal ribosomal protein uS7 family. As to quaternary structure, part of the 30S ribosomal subunit. Contacts proteins S9 and S11.

Functionally, one of the primary rRNA binding proteins, it binds directly to 16S rRNA where it nucleates assembly of the head domain of the 30S subunit. Is located at the subunit interface close to the decoding center, probably blocks exit of the E-site tRNA. The chain is Small ribosomal subunit protein uS7 from Chlamydia caviae (strain ATCC VR-813 / DSM 19441 / 03DC25 / GPIC) (Chlamydophila caviae).